The chain runs to 775 residues: Mitosis inducer protein kinase cdr2 (775 aa).

The Protein kinase domain maps to 10 to 262 (WELGLSLGSG…MEQIREHPFL (253 aa)). Residues 16-24 (LGSGGPNSS) and K39 contribute to the ATP site. Residue D133 is the Proton acceptor of the active site. Residues S309, S311, and S476 each carry the phosphoserine modification. A compositionally biased stretch (low complexity) spans 549–563 (NNIDNNNYNQPYANA). Residues 549-620 (NNIDNNNYNQ…TKKKLSGSPF (72 aa)) are disordered. Residues 584–593 (LSQSPASYDS) show a composition bias toward polar residues. S587 and S632 each carry phosphoserine.

Belongs to the protein kinase superfamily. CAMK Ser/Thr protein kinase family. NIM1 subfamily. As to quaternary structure, interacts with blt1 and mid1. Post-translationally, autophosphorylated.

It catalyses the reaction L-seryl-[protein] + ATP = O-phospho-L-seryl-[protein] + ADP + H(+). It carries out the reaction L-threonyl-[protein] + ATP = O-phospho-L-threonyl-[protein] + ADP + H(+). Acts as a mitotic inducer. In G2 it negatively regulates wee1, a mitotic inhibitor. Also has a role in cytokinesis where it required for proper septum formation. This chain is Mitosis inducer protein kinase cdr2 (cdr2), found in Schizosaccharomyces pombe (strain 972 / ATCC 24843) (Fission yeast).